Here is a 744-residue protein sequence, read N- to C-terminus: Adenosylcobalamin-dependent ribonucleoside-triphosphate reductase (744 aa).

A disulfide bridge connects residues cysteine 120 and cysteine 424. Residues 148–159 (SMPFSFLFDQLM) are effector region-1. Positions 169-318 (VNSNIKQIPK…ICNLIGKTVV (150 aa)) are effector region-2. Catalysis depends on residues cysteine 413 and glutamate 415. The adenosylcobalamin-binding-1 stretch occupies residues 570-631 (FHYAGYLIQR…SKNFASAGTV (62 aa)). Residues 690–729 (LKQAPKEPINKKTYEERAALITDDVEEVFTKQNDDQKGLE) are adenosylcobalamin-binding-2.

This sequence belongs to the class II ribonucleoside-triphosphate reductase family. As to quaternary structure, monomer. Requires adenosylcob(III)alamin as cofactor.

It carries out the reaction a 2'-deoxyribonucleoside 5'-triphosphate + [thioredoxin]-disulfide + H2O = a ribonucleoside 5'-triphosphate + [thioredoxin]-dithiol. Allosterically regulated by ATP and dNTP. The polypeptide is Adenosylcobalamin-dependent ribonucleoside-triphosphate reductase (rtpR) (Lactobacillus acidophilus (strain ATCC 700396 / NCK56 / N2 / NCFM)).